The chain runs to 198 residues: Putative glutathione S-transferase alpha-5 (198 aa).

In terms of domain architecture, GST N-terminal spans 2–78; that stretch reads TKPTLTYFPV…YISEKHDFRG (77 aa). Glutathione-binding positions include Tyr-8, Arg-42, 49 to 50, and 62 to 63; these read QL and QT. The GST C-terminal domain occupies 80 to 198; the sequence is TKEERARAHQ…YLESRPQSNF (119 aa).

This sequence belongs to the GST superfamily. Alpha family.

It carries out the reaction RX + glutathione = an S-substituted glutathione + a halide anion + H(+). Functionally, conjugation of reduced glutathione to a wide number of exogenous and endogenous hydrophobic electrophiles. In Dictyostelium discoideum (Social amoeba), this protein is Putative glutathione S-transferase alpha-5 (gsta5).